The chain runs to 100 residues: MELTPREKDKLLIFTAALLAERRQARGLKLNYPEAVALISAAIMEGARDGKTVADLMYYGTTILSRGDVMDGVAEMIPDIQVEATFPDGTKLVTVHQPIV.

It belongs to the urease gamma subunit family. As to quaternary structure, heterotrimer of UreA (gamma), UreB (beta) and UreC (alpha) subunits. Three heterotrimers associate to form the active enzyme.

It is found in the cytoplasm. It carries out the reaction urea + 2 H2O + H(+) = hydrogencarbonate + 2 NH4(+). It participates in nitrogen metabolism; urea degradation; CO(2) and NH(3) from urea (urease route): step 1/1. This Ralstonia nicotianae (strain ATCC BAA-1114 / GMI1000) (Ralstonia solanacearum) protein is Urease subunit gamma.